Here is a 729-residue protein sequence, read N- to C-terminus: Fatty acid oxidation complex subunit alpha (729 aa).

An enoyl-CoA hydratase/isomerase region spans residues 1 to 189 (MLYKGDTLYL…KVGLVDAVVK (189 aa)). Asp-296 lines the substrate pocket. Residues 311-729 (ETPKQAAVLG…AQPVGELQTA (419 aa)) are 3-hydroxyacyl-CoA dehydrogenase. NAD(+) contacts are provided by residues Met-324, Asp-343, 400-402 (VVE), Lys-407, and Ser-429. The For 3-hydroxyacyl-CoA dehydrogenase activity role is filled by His-450. Residue Asn-453 coordinates NAD(+). Positions 500 and 660 each coordinate substrate. The interval 708–729 (SHNAPYYPQVEPAQPVGELQTA) is disordered.

The protein in the N-terminal section; belongs to the enoyl-CoA hydratase/isomerase family. In the C-terminal section; belongs to the 3-hydroxyacyl-CoA dehydrogenase family. Heterotetramer of two alpha chains (FadB) and two beta chains (FadA).

It carries out the reaction a (3S)-3-hydroxyacyl-CoA + NAD(+) = a 3-oxoacyl-CoA + NADH + H(+). The enzyme catalyses a (3S)-3-hydroxyacyl-CoA = a (2E)-enoyl-CoA + H2O. The catalysed reaction is a 4-saturated-(3S)-3-hydroxyacyl-CoA = a (3E)-enoyl-CoA + H2O. It catalyses the reaction (3S)-3-hydroxybutanoyl-CoA = (3R)-3-hydroxybutanoyl-CoA. It carries out the reaction a (3Z)-enoyl-CoA = a 4-saturated (2E)-enoyl-CoA. The enzyme catalyses a (3E)-enoyl-CoA = a 4-saturated (2E)-enoyl-CoA. The protein operates within lipid metabolism; fatty acid beta-oxidation. Involved in the aerobic and anaerobic degradation of long-chain fatty acids via beta-oxidation cycle. Catalyzes the formation of 3-oxoacyl-CoA from enoyl-CoA via L-3-hydroxyacyl-CoA. It can also use D-3-hydroxyacyl-CoA and cis-3-enoyl-CoA as substrate. The polypeptide is Fatty acid oxidation complex subunit alpha (Cronobacter sakazakii (strain ATCC BAA-894) (Enterobacter sakazakii)).